A 375-amino-acid polypeptide reads, in one-letter code: Squamosa promoter-binding-like protein 9 (375 aa).

Disordered stretches follow at residues methionine 1–glycine 30 and glycine 43–arginine 73. A compositionally biased stretch (low complexity) spans serine 18–glycine 30. The SBP-type zinc finger occupies isoleucine 71–proline 148. Zn(2+) contacts are provided by cysteine 74, cysteine 79, cysteine 96, histidine 99, cysteine 115, cysteine 118, histidine 122, and cysteine 134. The Bipartite nuclear localization signal motif lies at lysine 131–lysine 147. 2 disordered regions span residues leucine 252–arginine 278 and serine 345–leucine 375. Positions asparagine 262–asparagine 275 are enriched in low complexity. The segment covering serine 345–arginine 362 has biased composition (basic and acidic residues). Positions alanine 363–leucine 375 are enriched in polar residues.

Zn(2+) serves as cofactor.

The protein localises to the nucleus. Its subcellular location is the cytoplasm. Functionally, trans-acting factor that binds specifically to the consensus nucleotide sequence 5'-TNCGTACAA-3'. The polypeptide is Squamosa promoter-binding-like protein 9 (SPL9) (Arabidopsis thaliana (Mouse-ear cress)).